The primary structure comprises 560 residues: Probable methionine--tRNA ligase, cytoplasmic (560 aa).

The 'HIGH' region motif lies at proline 16–asparagine 26. A 'KMSKS' region motif is present at residues lysine 347 to serine 351. Residue lysine 350 coordinates ATP.

This sequence belongs to the class-I aminoacyl-tRNA synthetase family.

It localises to the cytoplasm. It catalyses the reaction tRNA(Met) + L-methionine + ATP = L-methionyl-tRNA(Met) + AMP + diphosphate. The sequence is that of Probable methionine--tRNA ligase, cytoplasmic from Vairimorpha ceranae (strain BRL01) (Microsporidian parasite).